A 347-amino-acid polypeptide reads, in one-letter code: MRVADFHFDLPEALIARHPLPERRASRLLALDGPTGTLAHRQFADLLDYLRPGDLMVFNNTRVIPARLFGQKESGGKLEVLVERVLDQDRVLAHIRASKAPKPGTRILVEGGGSAEMLQRHDALFELAFAEPVLPLLERVGHMPLPPYIDRPDDAADRERYQTVYAQRAGAVAAPTAGLHFDEALLEAIRAKGVDTAFVTLHVGAGTFQPVRVERIEDHVMHREWLEVGQDVVDAVSVCRARGGRVVAVGTTSVRSLESAARDGELKPFSGDTDIFIYPGRPFHVVDALVTNFHLPESTLLMLVSAFAGYPETMAAYAAAVAQGYRFFSYGDAMFITRNPAPRGPED.

The protein belongs to the QueA family. Monomer.

It localises to the cytoplasm. It catalyses the reaction 7-aminomethyl-7-carbaguanosine(34) in tRNA + S-adenosyl-L-methionine = epoxyqueuosine(34) in tRNA + adenine + L-methionine + 2 H(+). It participates in tRNA modification; tRNA-queuosine biosynthesis. Functionally, transfers and isomerizes the ribose moiety from AdoMet to the 7-aminomethyl group of 7-deazaguanine (preQ1-tRNA) to give epoxyqueuosine (oQ-tRNA). This chain is S-adenosylmethionine:tRNA ribosyltransferase-isomerase, found in Pseudomonas aeruginosa (strain LESB58).